A 549-amino-acid polypeptide reads, in one-letter code: Hydroxylamine reductase (549 aa).

[4Fe-4S] cluster-binding residues include Cys-3, Cys-6, Cys-15, and Cys-21. Residues His-244, Glu-268, Cys-313, Cys-405, Cys-433, Cys-458, Glu-492, and Lys-494 each contribute to the hybrid [4Fe-2O-2S] cluster site. Position 405 is a cysteine persulfide (Cys-405).

This sequence belongs to the HCP family. Requires [4Fe-4S] cluster as cofactor. It depends on hybrid [4Fe-2O-2S] cluster as a cofactor.

It localises to the cytoplasm. The enzyme catalyses A + NH4(+) + H2O = hydroxylamine + AH2 + H(+). Functionally, catalyzes the reduction of hydroxylamine to form NH(3) and H(2)O. The sequence is that of Hydroxylamine reductase from Gloeothece citriformis (strain PCC 7424) (Cyanothece sp. (strain PCC 7424)).